Consider the following 146-residue polypeptide: Inclusion membrane protein D (146 aa).

Helical transmembrane passes span 38–58 and 68–88; these read AAVA…GLLF and VVAA…ALVG.

It is found in the secreted. It localises to the host vacuole. The protein localises to the host pathogen-containing vacuole. The protein resides in the host pathogen-containing vacuole membrane. Its function is as follows. Host inclusion membrane protein probably involved in early modification events of the chlamydial inclusion. This chain is Inclusion membrane protein D, found in Chlamydia trachomatis serovar L2 (strain ATCC VR-902B / DSM 19102 / 434/Bu).